Reading from the N-terminus, the 177-residue chain is T-cell receptor beta chain C region (177 aa).

The segment at 1–150 (EDLANVSAPQ…GVLSATVLYE (150 aa)) is c region. N-linked (GlcNAc...) asparagine glycans are attached at residues N5 and N22. C31 and C96 form a disulfide bridge. The chain crosses the membrane as a helical span at residues 146-168 (TVLYEILLGKATLYAVLVSALVL). The Cytoplasmic portion of the chain corresponds to 169-177 (MAMVKRKDS).

It is found in the membrane. The sequence is that of T-cell receptor beta chain C region from Oryctolagus cuniculus (Rabbit).